We begin with the raw amino-acid sequence, 2313 residues long: Cell surface glycoprotein 1 (2313 aa).

The signal sequence occupies residues 1-28; sequence MKRKNKVLSILLTLLLIISTTSVNMSFA. 2 consecutive Cohesin domains span residues 34–197 and 205–367; these read IEMV…VVEA and VALE…EIVV. A compositionally biased stretch (acidic residues) spans 369–378; that stretch reads GEEPGEEPTE. Residues 369–400 form a disordered region; the sequence is GEEPGEEPTEEPVPTETSVDPTPTVTEEPVPS. Positions 380-400 are enriched in low complexity; it reads PVPTETSVDPTPTVTEEPVPS. One can recognise a Cohesin 3 domain in the interval 407-569; sequence VIMELDKTKV…SVVQPGEIVV (163 aa). The segment covering 571–580 has biased composition (acidic residues); the sequence is GEEPGEEPTE. Residues 571 to 602 form a disordered region; it reads GEEPGEEPTEEPVPTETSVDPTPTVTEEPVPS. A compositionally biased stretch (low complexity) spans 582–602; the sequence is PVPTETSVDPTPTVTEEPVPS. A Cohesin 4 domain is found at 609-771; sequence VIMELDKTKV…SVVQPGEIVA (163 aa). Residues 772-782 show a composition bias toward acidic residues; that stretch reads EGEEPGEEPTE. The disordered stretch occupies residues 772–805; that stretch reads EGEEPGEEPTEEPVPTETSADPTPTVTEEPVPSE. Low complexity predominate over residues 784 to 803; the sequence is PVPTETSADPTPTVTEEPVP. Residues 811–973 form the Cohesin 5 domain; the sequence is VIMELDKTKV…SVVQPGEIVA (163 aa). Acidic residues predominate over residues 974–984; that stretch reads EGEEPGEEPTE. The tract at residues 974–1007 is disordered; that stretch reads EGEEPGEEPTEEPVPTETPVDPTPTVTEEPVPSE. Positions 986–1007 are enriched in low complexity; that stretch reads PVPTETPVDPTPTVTEEPVPSE. A Cohesin 6 domain is found at 1013–1175; sequence VIMELDKTKV…SVVQPGEIVA (163 aa). Disordered stretches follow at residues 1177–1203 and 1374–2111; these read GEEP…EPVP and ASDE…PDGS. Residues 1184–1203 are compositionally biased toward low complexity; it reads PVPTETPVDPTPTVTEEPVP. The Cohesin 7 domain maps to 1211–1375; sequence VIMELDKTKV…IQPAPIKAAS (165 aa). Low complexity predominate over residues 1376–1390; that stretch reads DEPIPTDTPSDEPTP. The interval 1383-2025 is approximate tandem repeats of T-P-S-D-E-P; it reads TPSDEPTPSD…SDEPTPSETP (643 aa). A compositionally biased stretch (pro residues) spans 1391–1411; the sequence is SDEPTPSDEPTPSDEPTPSDE. Residues 1423–1433 are compositionally biased toward low complexity; sequence PTDTPSDEPTP. A compositionally biased stretch (pro residues) spans 1434-1454; that stretch reads SDEPTPSDEPTPSDEPTPSDE. Residues 1466–1476 are compositionally biased toward low complexity; the sequence is PTDTPSDEPTP. The segment covering 1477-1497 has biased composition (pro residues); sequence SDEPTPSDEPTPSDEPTPSDE. A compositionally biased stretch (low complexity) spans 1509 to 1519; that stretch reads PTDTPSDEPTP. A compositionally biased stretch (pro residues) spans 1520-1540; the sequence is SDEPTPSDEPTPSDEPTPSDE. Over residues 1552–1562 the composition is skewed to low complexity; the sequence is PTDTPSDEPTP. The segment covering 1563-1595 has biased composition (pro residues); it reads SDEPTPSDEPTPSDEPTPSDEPTPSDEPTPSDE. The segment covering 1607–1617 has biased composition (low complexity); the sequence is PTDTPSDEPTP. Pro residues predominate over residues 1618-1650; that stretch reads SDEPTPSDEPTPSDEPTPSDEPTPSDEPTPSDE. The span at 1662–1672 shows a compositional bias: low complexity; that stretch reads PTDTPSDEPTP. A compositionally biased stretch (pro residues) spans 1673–1693; that stretch reads SDEPTPSDEPTPSDEPTPSDE. Over residues 1705–1715 the composition is skewed to low complexity; it reads PTDTPSDEPTP. Positions 1716-1736 are enriched in pro residues; the sequence is SDEPTPSDEPTPSDEPTPSDE. Positions 1748–1758 are enriched in low complexity; the sequence is PTDTPSDEPTP. Over residues 1759–1779 the composition is skewed to pro residues; the sequence is SDEPTPSDEPTPSDEPTPSDE. The span at 1791 to 1801 shows a compositional bias: low complexity; sequence PTDTPSDEPTP. Positions 1802–1822 are enriched in pro residues; the sequence is SDEPTPSDEPTPSDEPTPSDE. Residues 1834–1844 are compositionally biased toward low complexity; sequence PTDTPSDEPTP. The span at 1845–1865 shows a compositional bias: pro residues; sequence SDEPTPSDEPTPSDEPTPSDE. A compositionally biased stretch (low complexity) spans 1877–1887; that stretch reads PTDTPSDEPTP. Positions 1888 to 1908 are enriched in pro residues; it reads SDEPTPSDEPTPSDEPTPSDE. A compositionally biased stretch (low complexity) spans 1920-1930; the sequence is PTDTPSDEPTP. Residues 1931-1963 are compositionally biased toward pro residues; sequence SDEPTPSDEPTPSDEPTPSDEPTPSDEPTPSDE. Residues 1975–1985 are compositionally biased toward low complexity; the sequence is PTDTPSDEPTP. Pro residues-rich tracts occupy residues 1986–2018 and 2027–2039; these read SDEP…PSDE and EPTP…PTPS. The span at 2045–2062 shows a compositional bias: gly residues; it reads GSGGSGGSGGGGGGGGGT. SLH domains are found at residues 2067–2140, 2141–2204, and 2211–2274; these read PTPT…YGAQ, SASP…EIMS, and ISNP…GAPK. Low complexity predominate over residues 2073 to 2082; sequence SKPTSTPAPT.

As to quaternary structure, assembled into mono-layered crystalline arrays.

Its subcellular location is the secreted. The protein localises to the cell wall. The protein resides in the S-layer. This is Cell surface glycoprotein 1 (olpB) from Acetivibrio thermocellus (strain ATCC 27405 / DSM 1237 / JCM 9322 / NBRC 103400 / NCIMB 10682 / NRRL B-4536 / VPI 7372) (Clostridium thermocellum).